A 132-amino-acid chain; its full sequence is uncharacterized protein (132 aa).

The segment at tryptophan 68–serine 91 is disordered.

This is an uncharacterized protein from Streptomyces cacaoi.